A 397-amino-acid polypeptide reads, in one-letter code: 1-deoxy-D-xylulose 5-phosphate reductoisomerase (397 aa).

The NADPH site is built by T17, G18, S19, I20, N47, and N130. K131 contributes to the 1-deoxy-D-xylulose 5-phosphate binding site. E132 serves as a coordination point for NADPH. Position 156 (D156) interacts with Mn(2+). 1-deoxy-D-xylulose 5-phosphate-binding residues include S157, E158, S182, and H205. E158 contacts Mn(2+). Residue G211 participates in NADPH binding. 1-deoxy-D-xylulose 5-phosphate is bound by residues S218, N223, K224, and E227. A Mn(2+)-binding site is contributed by E227.

Belongs to the DXR family. Mg(2+) is required as a cofactor. Mn(2+) serves as cofactor.

It catalyses the reaction 2-C-methyl-D-erythritol 4-phosphate + NADP(+) = 1-deoxy-D-xylulose 5-phosphate + NADPH + H(+). The protein operates within isoprenoid biosynthesis; isopentenyl diphosphate biosynthesis via DXP pathway; isopentenyl diphosphate from 1-deoxy-D-xylulose 5-phosphate: step 1/6. Functionally, catalyzes the NADPH-dependent rearrangement and reduction of 1-deoxy-D-xylulose-5-phosphate (DXP) to 2-C-methyl-D-erythritol 4-phosphate (MEP). The sequence is that of 1-deoxy-D-xylulose 5-phosphate reductoisomerase from Allorhizobium ampelinum (strain ATCC BAA-846 / DSM 112012 / S4) (Agrobacterium vitis (strain S4)).